Here is a 393-residue protein sequence, read N- to C-terminus: MTAPTTRKDLMIVNMGPQHPSMHGVLRLIVTLDGEDVVDCEPILGYLHRGMEKIAENRTIIQYLPYVTRWDYLATMFTEAITINGPEQLGNIQVPKRASYIRVIMLELSRIASHLLWLGPFMADIGAQTPFFYIFRERELIYDLFEAATGMRMMHNYFRIGGVAADLPYGWIDKCLDFCDYFLTGVAEYQKLITRNPIFLERVEGVGIIGGDEALNWGLSGPMLRASGIEWDLRKVDHYESYDEFDWQVQWQREGDSLARYLVRIGEMTESIKIIQQALEGIPGGPYENLEIRRFDRLKDPEWNDFEYRFISKKPSPTFELSKQELYVRVEAPKGELGIFLIGDQSVFPWRWKIRPPGFINLQILPQLVKRMKLADIMTILGSIDIIMGEVDR.

Belongs to the complex I 49 kDa subunit family. In terms of assembly, NDH is composed of at least 16 different subunits, 5 of which are encoded in the nucleus.

It is found in the plastid. Its subcellular location is the chloroplast thylakoid membrane. The enzyme catalyses a plastoquinone + NADH + (n+1) H(+)(in) = a plastoquinol + NAD(+) + n H(+)(out). It catalyses the reaction a plastoquinone + NADPH + (n+1) H(+)(in) = a plastoquinol + NADP(+) + n H(+)(out). Its function is as follows. NDH shuttles electrons from NAD(P)H:plastoquinone, via FMN and iron-sulfur (Fe-S) centers, to quinones in the photosynthetic chain and possibly in a chloroplast respiratory chain. The immediate electron acceptor for the enzyme in this species is believed to be plastoquinone. Couples the redox reaction to proton translocation, and thus conserves the redox energy in a proton gradient. The polypeptide is NAD(P)H-quinone oxidoreductase subunit H, chloroplastic (Nicotiana sylvestris (Wood tobacco)).